Here is a 184-residue protein sequence, read N- to C-terminus: ATP synthase subunit delta (184 aa).

Belongs to the ATPase delta chain family. As to quaternary structure, F-type ATPases have 2 components, F(1) - the catalytic core - and F(0) - the membrane proton channel. F(1) has five subunits: alpha(3), beta(3), gamma(1), delta(1), epsilon(1). F(0) has three main subunits: a(1), b(2) and c(10-14). The alpha and beta chains form an alternating ring which encloses part of the gamma chain. F(1) is attached to F(0) by a central stalk formed by the gamma and epsilon chains, while a peripheral stalk is formed by the delta and b chains.

The protein localises to the cell inner membrane. Functionally, f(1)F(0) ATP synthase produces ATP from ADP in the presence of a proton or sodium gradient. F-type ATPases consist of two structural domains, F(1) containing the extramembraneous catalytic core and F(0) containing the membrane proton channel, linked together by a central stalk and a peripheral stalk. During catalysis, ATP synthesis in the catalytic domain of F(1) is coupled via a rotary mechanism of the central stalk subunits to proton translocation. This protein is part of the stalk that links CF(0) to CF(1). It either transmits conformational changes from CF(0) to CF(1) or is implicated in proton conduction. This Caulobacter sp. (strain K31) protein is ATP synthase subunit delta.